A 377-amino-acid chain; its full sequence is Actin-related protein T2 (377 aa).

Belongs to the actin family.

Its subcellular location is the cytoplasm. The protein localises to the cytoskeleton. This chain is Actin-related protein T2 (ACTRT2), found in Macaca fascicularis (Crab-eating macaque).